The primary structure comprises 876 residues: Alanine--tRNA ligase (876 aa).

Zn(2+) is bound by residues His565, His569, Cys667, and His671.

This sequence belongs to the class-II aminoacyl-tRNA synthetase family. Zn(2+) is required as a cofactor.

The protein resides in the cytoplasm. The enzyme catalyses tRNA(Ala) + L-alanine + ATP = L-alanyl-tRNA(Ala) + AMP + diphosphate. Catalyzes the attachment of alanine to tRNA(Ala) in a two-step reaction: alanine is first activated by ATP to form Ala-AMP and then transferred to the acceptor end of tRNA(Ala). Also edits incorrectly charged Ser-tRNA(Ala) and Gly-tRNA(Ala) via its editing domain. This chain is Alanine--tRNA ligase, found in Staphylococcus aureus (strain Mu3 / ATCC 700698).